Consider the following 295-residue polypeptide: Ethanolamine ammonia-lyase small subunit (295 aa).

V207, E228, and C258 together coordinate adenosylcob(III)alamin.

It belongs to the EutC family. The basic unit is a heterodimer which dimerizes to form tetramers. The heterotetramers trimerize; 6 large subunits form a core ring with 6 small subunits projecting outwards. Adenosylcob(III)alamin is required as a cofactor.

Its subcellular location is the bacterial microcompartment. The enzyme catalyses ethanolamine = acetaldehyde + NH4(+). It functions in the pathway amine and polyamine degradation; ethanolamine degradation. In terms of biological role, catalyzes the deamination of various vicinal amino-alcohols to oxo compounds. Allows this organism to utilize ethanolamine as the sole source of nitrogen and carbon in the presence of external vitamin B12. This Escherichia coli O7:K1 (strain IAI39 / ExPEC) protein is Ethanolamine ammonia-lyase small subunit.